The sequence spans 351 residues: Nicotinate-nucleotide--dimethylbenzimidazole phosphoribosyltransferase (351 aa).

Glutamate 317 (proton acceptor) is an active-site residue.

This sequence belongs to the CobT family.

The enzyme catalyses 5,6-dimethylbenzimidazole + nicotinate beta-D-ribonucleotide = alpha-ribazole 5'-phosphate + nicotinate + H(+). It participates in nucleoside biosynthesis; alpha-ribazole biosynthesis; alpha-ribazole from 5,6-dimethylbenzimidazole: step 1/2. Catalyzes the synthesis of alpha-ribazole-5'-phosphate from nicotinate mononucleotide (NAMN) and 5,6-dimethylbenzimidazole (DMB). The protein is Nicotinate-nucleotide--dimethylbenzimidazole phosphoribosyltransferase of Pseudomonas fluorescens (strain SBW25).